Reading from the N-terminus, the 930-residue chain is Isoleucine--tRNA ligase (930 aa).

The 'HIGH' region signature appears at 57-67 (PYANGNIHVGH). An L-isoleucyl-5'-AMP-binding site is contributed by E554. The short motif at 595–599 (KMSKS) is the 'KMSKS' region element. ATP is bound at residue K598. 4 residues coordinate Zn(2+): C888, C891, C908, and C911.

This sequence belongs to the class-I aminoacyl-tRNA synthetase family. IleS type 1 subfamily. As to quaternary structure, monomer. It depends on Zn(2+) as a cofactor.

Its subcellular location is the cytoplasm. It catalyses the reaction tRNA(Ile) + L-isoleucine + ATP = L-isoleucyl-tRNA(Ile) + AMP + diphosphate. Catalyzes the attachment of isoleucine to tRNA(Ile). As IleRS can inadvertently accommodate and process structurally similar amino acids such as valine, to avoid such errors it has two additional distinct tRNA(Ile)-dependent editing activities. One activity is designated as 'pretransfer' editing and involves the hydrolysis of activated Val-AMP. The other activity is designated 'posttransfer' editing and involves deacylation of mischarged Val-tRNA(Ile). The polypeptide is Isoleucine--tRNA ligase (Streptococcus mutans serotype c (strain ATCC 700610 / UA159)).